We begin with the raw amino-acid sequence, 150 residues long: Detocs response regulatory protein DtcB (150 aa).

A Response regulatory domain is found at 2–150; sequence KILIADDNIQ…TDLIKKITEL (149 aa). Asp-54 carries the post-translational modification 4-aspartylphosphate.

Post-translationally, probably phosphorylated by DtcA.

Its function is as follows. Possible phosphate scavenger member of the two-component regulatory system Detocs that confers resistance to bacteriophage. When the system (DtcA-DtcB-DtcC) is expressed in a susceptible E.coli (strain MG1655) it confers resistance to bacteriophages T2, T4, T5, T7, SECphi4, SECphi6 and SECphi27; the level of resistance varies, resistance to T2, T7 and SECphi4 is not very high. DtcA probably autophosphorylates upon sensing viral infection, and subsequently transfers the phosphate signal to DtcC which activates it, leading to an antiviral defense; DtcB (this subunit) may scavenge phosphorylation signals from accidental activation of DtcA. The polypeptide is Detocs response regulatory protein DtcB (Enterobacter cloacae (strain JD6301)).